A 426-amino-acid polypeptide reads, in one-letter code: Glutamate-1-semialdehyde 2,1-aminomutase (426 aa).

Lys265 is subject to N6-(pyridoxal phosphate)lysine.

Belongs to the class-III pyridoxal-phosphate-dependent aminotransferase family. HemL subfamily. As to quaternary structure, homodimer. Pyridoxal 5'-phosphate serves as cofactor.

It localises to the cytoplasm. It catalyses the reaction (S)-4-amino-5-oxopentanoate = 5-aminolevulinate. It functions in the pathway porphyrin-containing compound metabolism; protoporphyrin-IX biosynthesis; 5-aminolevulinate from L-glutamyl-tRNA(Glu): step 2/2. This chain is Glutamate-1-semialdehyde 2,1-aminomutase, found in Escherichia fergusonii (strain ATCC 35469 / DSM 13698 / CCUG 18766 / IAM 14443 / JCM 21226 / LMG 7866 / NBRC 102419 / NCTC 12128 / CDC 0568-73).